We begin with the raw amino-acid sequence, 396 residues long: Probable sugar efflux transporter (396 aa).

Helical transmembrane passes span 15–35, 50–70, 81–101, 103–123, 136–156, 170–190, 209–229, 246–266, 275–295, 299–319, 333–353, and 364–384; these read VVTLAVAAFIFNTTEFVPVGL, VGIMLTIYAWVVALMSLPFML, LICLFVVFIASHVLSFLSWSF, VLVISRIGVAFAHAIFWSITA, AQALSLIATGTALAMVLGLPL, FFAIGIGALITLLCLIKLLPL, PALMSIYLLTVVVVTAHYTAY, FATALLLLLGGAGIIGSVIFG, ALVSTAIALLLVCLALLLPAA, IHLGVLSIFWGIAMMLIGLGM, VAMALFSGIFNIGIGAGALVG, and MIGYVGAVPAFAALIWSIIIF.

This sequence belongs to the major facilitator superfamily. SotB (TC 2.A.1.2) family.

The protein resides in the cell inner membrane. Involved in the efflux of sugars. The physiological role may be the reduction of the intracellular concentration of toxic sugars or sugar metabolites. This is Probable sugar efflux transporter from Shigella boydii serotype 18 (strain CDC 3083-94 / BS512).